The following is a 270-amino-acid chain: uncharacterized protein (270 aa).

Catalysis depends on H171, which acts as the Proton donor. Catalysis depends on C261, which acts as the Nucleophile.

This sequence belongs to the DDAH family.

This is an uncharacterized protein from Aeropyrum pernix (strain ATCC 700893 / DSM 11879 / JCM 9820 / NBRC 100138 / K1).